A 352-amino-acid polypeptide reads, in one-letter code: Speedy protein E18 (352 aa).

A compositionally biased stretch (basic residues) spans 1-12 (MDRTKTRFRKRG). The tract at residues 1–90 (MDRTKTRFRK…EPEKELAPEP (90 aa)) is disordered. The span at 16–39 (GKITTSRQPHPQNEQSLQRSTSGY) shows a compositional bias: polar residues. Residues 76 to 90 (DESEEEPEKELAPEP) are compositionally biased toward acidic residues.

The protein belongs to the Speedy/Ringo family.

In Homo sapiens (Human), this protein is Speedy protein E18.